The following is a 122-amino-acid chain: Protein translocase subunit SecE (122 aa).

3 helical membrane passes run 14-34, 38-58, and 93-113; these read LLKWLLVAVLVVVAVVGNQYF, PILYRVLGILVLAVIAAFLAL, and LIVVAVVLVMALLLWGLDSLL.

Belongs to the SecE/SEC61-gamma family. As to quaternary structure, component of the Sec protein translocase complex. Heterotrimer consisting of SecY, SecE and SecG subunits. The heterotrimers can form oligomers, although 1 heterotrimer is thought to be able to translocate proteins. Interacts with the ribosome. Interacts with SecDF, and other proteins may be involved. Interacts with SecA.

The protein resides in the cell inner membrane. Functionally, essential subunit of the Sec protein translocation channel SecYEG. Clamps together the 2 halves of SecY. May contact the channel plug during translocation. This Pseudomonas aeruginosa (strain ATCC 15692 / DSM 22644 / CIP 104116 / JCM 14847 / LMG 12228 / 1C / PRS 101 / PAO1) protein is Protein translocase subunit SecE.